Reading from the N-terminus, the 230-residue chain is UPF0173 metal-dependent hydrolase Sca_1312 (230 aa).

This sequence belongs to the UPF0173 family.

This chain is UPF0173 metal-dependent hydrolase Sca_1312, found in Staphylococcus carnosus (strain TM300).